The following is a 148-amino-acid chain: MFDVTLLILLGLAALGFVSHNTTVAVSILVLIIVRVTPLSTFFPWIEKQGLTIGIIILTIGVMAPIASGSLPPSTLIHSFFNWKSLVAIAVGVIVSWLGGRGVTLMGSQPQLVAGLLVGTVLGVALFRGVPVGPLIAAGLVSLIVGKQ.

Transmembrane regions (helical) follow at residues 14–34, 51–71, 80–100, and 121–141; these read ALGF…LIIV, LTIG…SGSL, FFNW…WLGG, and VLGV…AGLV.

It belongs to the UPF0756 family.

It localises to the cell membrane. In Escherichia fergusonii (strain ATCC 35469 / DSM 13698 / CCUG 18766 / IAM 14443 / JCM 21226 / LMG 7866 / NBRC 102419 / NCTC 12128 / CDC 0568-73), this protein is UPF0756 membrane protein YeaL.